The chain runs to 264 residues: Thiazole synthase (264 aa).

The Schiff-base intermediate with DXP role is filled by K104. Residues G165, 191-192 (AG), and 213-214 (NT) contribute to the 1-deoxy-D-xylulose 5-phosphate site.

The protein belongs to the ThiG family. In terms of assembly, homotetramer. Forms heterodimers with either ThiH or ThiS.

It is found in the cytoplasm. It carries out the reaction [ThiS sulfur-carrier protein]-C-terminal-Gly-aminoethanethioate + 2-iminoacetate + 1-deoxy-D-xylulose 5-phosphate = [ThiS sulfur-carrier protein]-C-terminal Gly-Gly + 2-[(2R,5Z)-2-carboxy-4-methylthiazol-5(2H)-ylidene]ethyl phosphate + 2 H2O + H(+). The protein operates within cofactor biosynthesis; thiamine diphosphate biosynthesis. Functionally, catalyzes the rearrangement of 1-deoxy-D-xylulose 5-phosphate (DXP) to produce the thiazole phosphate moiety of thiamine. Sulfur is provided by the thiocarboxylate moiety of the carrier protein ThiS. In vitro, sulfur can be provided by H(2)S. This Oleidesulfovibrio alaskensis (strain ATCC BAA-1058 / DSM 17464 / G20) (Desulfovibrio alaskensis) protein is Thiazole synthase.